We begin with the raw amino-acid sequence, 118 residues long: Deoxynogalonate monooxygenase (118 aa).

The ABM domain maps to 14-100 (VTFVNRFTVH…ALSTSEHGLF (87 aa)).

Homodimer.

The catalysed reaction is deoxynogalonate + O2 = nogalonate + H2O + H(+). It functions in the pathway antibiotic biosynthesis. In terms of biological role, involved in the biosynthesis of the anthracycline (aromatic polyketide) antibiotic nogalamycin. Catalyzes the oxygenation of 12-deoxy-nogalonic acid at position 12 to yield nogalonic acid. This chain is Deoxynogalonate monooxygenase, found in Streptomyces nogalater.